An 89-amino-acid polypeptide reads, in one-letter code: Chromosomal protein MC1a (89 aa).

Functionally, protects DNA against thermal denaturation and modulates transcription. The polypeptide is Chromosomal protein MC1a (Methanothrix soehngenii (Methanosaeta concilii)).